The chain runs to 353 residues: MEDGVLKEGFLVKRGHIVHNWKARWFILRQNTLLYYKLEGGRRVTPPKGRIVLDGCTITCPCLEYENRPLLIKLKTRTSTEYFLEACSREERDSWAFEITGAIHAGQPGKIQQLHILKNSFKLPPHISLHRIVDKMHDTSTGIRPSPNMEQGSTYKKTFLGSSLVDWLISSNFAASRLEAVTLASMLMEENFLRPVGVRSMGAIRSGDLAEQFLDDSTALYTFAESYKKKVSSKEEISLSTMELSGTVVKQGYLSKQGHKRKNWKVRRFVLRKDPAFLHYYDPSKEENRPVGGFSLRGSLVSALEDNGVPTGVKGNVQGNLFKVITKDDTHYYIQASSKAERAEWIEAIKKLT.

Residue methionine 1 is modified to N-acetylmethionine. The PH 1 domain occupies 4–104 (GVLKEGFLVK…WAFEITGAIH (101 aa)). Residue serine 120 is modified to Phosphoserine. Residues 139–225 (TSTGIRPSPN…DSTALYTFAE (87 aa)) form the DEP domain. The PH 2 domain maps to 247-353 (TVVKQGYLSK…EWIEAIKKLT (107 aa)).

As to expression, ubiquitous. Most abundant in the thymus, large bowel, small bowel, stomach, and prostate.

The protein localises to the cell projection. It localises to the lamellipodium membrane. The protein resides in the cytoplasm. It is found in the cytoskeleton. In terms of biological role, may help orchestrate cytoskeletal arrangement. Contribute to lamellipodia formation. Overexpression of pleckstrin 2 causes large lamellipodia and peripheral ruffle formation. In Mus musculus (Mouse), this protein is Pleckstrin-2 (Plek2).